Consider the following 211-residue polypeptide: Regulator of G-protein signaling 2 (211 aa).

Disordered regions lie at residues 14 to 33 (GPMD…REKM) and 49 to 71 (LQNS…TFIK). The tract at residues 32–66 (KMKRTLLKDWKSRLSYFLQNSSSPGKPKTGKKSKQ) is necessary for membrane association. A necessary to inhibit protein synthesis region spans residues 79 to 116 (LWSEAFDELLASKYGLAAFRAFLKSEFCEENIEFWLAC). One can recognise an RGS domain in the interval 83–199 (AFDELLASKY…LESEFYQDLC (117 aa)).

In terms of assembly, interacts with GNAQ. Does not interact with GNAI1 and GNAI3. Interacts with EIF2B5. Interacts with PRKG1 (isoform alpha). Phosphorylated by protein kinase C. Phosphorylation by PRKG1 leads to activation of RGS2 activity.

The protein resides in the cell membrane. It is found in the cytoplasm. The protein localises to the nucleus. It localises to the nucleolus. Functionally, regulates G protein-coupled receptor signaling cascades. Inhibits signal transduction by increasing the GTPase activity of G protein alpha subunits, thereby driving them into their inactive GDP-bound form. It is involved in the negative regulation of the angiotensin-activated signaling pathway. Plays a role in the regulation of blood pressure in response to signaling via G protein-coupled receptors and GNAQ. Plays a role in regulating the constriction and relaxation of vascular smooth muscle. Binds EIF2B5 and blocks its activity, thereby inhibiting the translation of mRNA into protein. The sequence is that of Regulator of G-protein signaling 2 (RGS2) from Bos taurus (Bovine).